Consider the following 202-residue polypeptide: UPF0637 protein Exig_2520 (202 aa).

The protein belongs to the UPF0637 family.

This chain is UPF0637 protein Exig_2520, found in Exiguobacterium sibiricum (strain DSM 17290 / CCUG 55495 / CIP 109462 / JCM 13490 / 255-15).